The chain runs to 317 residues: Transaldolase (317 aa).

Residue lysine 126 is the Schiff-base intermediate with substrate of the active site.

The protein belongs to the transaldolase family. Type 1 subfamily. In terms of assembly, homodimer.

It localises to the cytoplasm. It carries out the reaction D-sedoheptulose 7-phosphate + D-glyceraldehyde 3-phosphate = D-erythrose 4-phosphate + beta-D-fructose 6-phosphate. Its pathway is carbohydrate degradation; pentose phosphate pathway; D-glyceraldehyde 3-phosphate and beta-D-fructose 6-phosphate from D-ribose 5-phosphate and D-xylulose 5-phosphate (non-oxidative stage): step 2/3. Functionally, transaldolase is important for the balance of metabolites in the pentose-phosphate pathway. This Burkholderia pseudomallei (strain K96243) protein is Transaldolase.